Here is a 460-residue protein sequence, read N- to C-terminus: Tyrosine phenol-lyase (460 aa).

Lys-260 is modified (N6-(pyridoxal phosphate)lysine).

This sequence belongs to the beta-eliminating lyase family. As to quaternary structure, homotetramer. The cofactor is pyridoxal 5'-phosphate.

It catalyses the reaction L-tyrosine + H2O = phenol + pyruvate + NH4(+). The protein is Tyrosine phenol-lyase of Fusobacterium nucleatum subsp. nucleatum (strain ATCC 25586 / DSM 15643 / BCRC 10681 / CIP 101130 / JCM 8532 / KCTC 2640 / LMG 13131 / VPI 4355).